The following is a 359-amino-acid chain: NF-kappa-B inhibitor beta (359 aa).

Residues Ser-19 and Ser-23 each carry the phosphoserine; by RPS6KA1 modification. 6 ANK repeats span residues 57–86 (DGDT…GTEY), 93–122 (LGQT…GVLV), 126–155 (GGHT…SHPR), 206–235 (DGHT…DLNK), 240–269 (CGRT…DPTA), and 273–302 (GGRT…PEPE). Positions 153–192 (HPRDASDTYLTQSQDHTPDTSHAPVATDPQPNPGNEEELR) are disordered. Positions 298 to 308 (APEPEDKDDKL) are enriched in basic and acidic residues. The interval 298–359 (APEPEDKDDK…KPLPDDPNPA (62 aa)) is disordered. The residue at position 318 (Ser-318) is a Phosphoserine. Acidic residues predominate over residues 318–331 (SDSDNRDEGDEYDD). Pro residues predominate over residues 342-359 (QPPPSPAAKPLPDDPNPA).

Belongs to the NF-kappa-B inhibitor family. In terms of assembly, interacts with THRB (via ligand-binding domain). Interacts with RELA and REL. Interacts with COMMD1. Interacts with inhibitor kappa B-interacting Ras-like NKIRAS1 and NKIRAS2. Post-translationally, phosphorylated by RPS6KA1; followed by degradation. Interaction with NKIRAS1 and NKIRAS2 probably prevents phosphorylation.

It localises to the cytoplasm. It is found in the nucleus. Its function is as follows. Inhibits NF-kappa-B by complexing with and trapping it in the cytoplasm. However, the unphosphorylated form resynthesized after cell stimulation is able to bind NF-kappa-B allowing its transport to the nucleus and protecting it to further NFKBIA-dependent inactivation. Association with inhibitor kappa B-interacting NKIRAS1 and NKIRAS2 prevent its phosphorylation rendering it more resistant to degradation, explaining its slower degradation. This Rattus norvegicus (Rat) protein is NF-kappa-B inhibitor beta (Nfkbib).